Reading from the N-terminus, the 358-residue chain is Peptide chain release factor 1 (358 aa).

The residue at position 233 (Gln-233) is an N5-methylglutamine.

Belongs to the prokaryotic/mitochondrial release factor family. Methylated by PrmC. Methylation increases the termination efficiency of RF1.

The protein resides in the cytoplasm. Functionally, peptide chain release factor 1 directs the termination of translation in response to the peptide chain termination codons UAG and UAA. The sequence is that of Peptide chain release factor 1 from Listeria monocytogenes serovar 1/2a (strain ATCC BAA-679 / EGD-e).